Consider the following 118-residue polypeptide: Large ribosomal subunit protein eL18 (118 aa).

Belongs to the eukaryotic ribosomal protein eL18 family.

The chain is Large ribosomal subunit protein eL18 (rpl18e) from Sulfolobus acidocaldarius (strain ATCC 33909 / DSM 639 / JCM 8929 / NBRC 15157 / NCIMB 11770).